The primary structure comprises 293 residues: 4-hydroxy-3-methylbut-2-enyl diphosphate reductase (293 aa).

A [4Fe-4S] cluster-binding site is contributed by C12. (2E)-4-hydroxy-3-methylbut-2-enyl diphosphate is bound by residues H40 and H74. H40 and H74 together coordinate dimethylallyl diphosphate. Residues H40 and H74 each coordinate isopentenyl diphosphate. C96 contributes to the [4Fe-4S] cluster binding site. Residue H128 participates in (2E)-4-hydroxy-3-methylbut-2-enyl diphosphate binding. H128 serves as a coordination point for dimethylallyl diphosphate. An isopentenyl diphosphate-binding site is contributed by H128. E130 functions as the Proton donor in the catalytic mechanism. T166 is a binding site for (2E)-4-hydroxy-3-methylbut-2-enyl diphosphate. C202 contributes to the [4Fe-4S] cluster binding site. (2E)-4-hydroxy-3-methylbut-2-enyl diphosphate-binding residues include S230, S231, N232, and S274. Positions 230, 231, 232, and 274 each coordinate dimethylallyl diphosphate. 4 residues coordinate isopentenyl diphosphate: S230, S231, N232, and S274.

It belongs to the IspH family. [4Fe-4S] cluster is required as a cofactor.

The catalysed reaction is isopentenyl diphosphate + 2 oxidized [2Fe-2S]-[ferredoxin] + H2O = (2E)-4-hydroxy-3-methylbut-2-enyl diphosphate + 2 reduced [2Fe-2S]-[ferredoxin] + 2 H(+). It catalyses the reaction dimethylallyl diphosphate + 2 oxidized [2Fe-2S]-[ferredoxin] + H2O = (2E)-4-hydroxy-3-methylbut-2-enyl diphosphate + 2 reduced [2Fe-2S]-[ferredoxin] + 2 H(+). The protein operates within isoprenoid biosynthesis; dimethylallyl diphosphate biosynthesis; dimethylallyl diphosphate from (2E)-4-hydroxy-3-methylbutenyl diphosphate: step 1/1. Its pathway is isoprenoid biosynthesis; isopentenyl diphosphate biosynthesis via DXP pathway; isopentenyl diphosphate from 1-deoxy-D-xylulose 5-phosphate: step 6/6. In terms of biological role, catalyzes the conversion of 1-hydroxy-2-methyl-2-(E)-butenyl 4-diphosphate (HMBPP) into a mixture of isopentenyl diphosphate (IPP) and dimethylallyl diphosphate (DMAPP). Acts in the terminal step of the DOXP/MEP pathway for isoprenoid precursor biosynthesis. The protein is 4-hydroxy-3-methylbut-2-enyl diphosphate reductase of Cytophaga hutchinsonii (strain ATCC 33406 / DSM 1761 / CIP 103989 / NBRC 15051 / NCIMB 9469 / D465).